A 601-amino-acid chain; its full sequence is Elongation factor 4 (601 aa).

The region spanning 6 to 188 (KFTRNFSIIA…AICYLLPPPV (183 aa)) is the tr-type G domain. GTP-binding positions include 18-23 (DHGKST) and 135-138 (NKID).

Belongs to the TRAFAC class translation factor GTPase superfamily. Classic translation factor GTPase family. LepA subfamily.

It is found in the cell inner membrane. The enzyme catalyses GTP + H2O = GDP + phosphate + H(+). Required for accurate and efficient protein synthesis under certain stress conditions. May act as a fidelity factor of the translation reaction, by catalyzing a one-codon backward translocation of tRNAs on improperly translocated ribosomes. Back-translocation proceeds from a post-translocation (POST) complex to a pre-translocation (PRE) complex, thus giving elongation factor G a second chance to translocate the tRNAs correctly. Binds to ribosomes in a GTP-dependent manner. In Leptospira biflexa serovar Patoc (strain Patoc 1 / Ames), this protein is Elongation factor 4.